Here is a 681-residue protein sequence, read N- to C-terminus: Minichromosome maintenance domain-containing protein 2 (681 aa).

At Ser292 the chain carries Phosphoserine. An MCM domain is found at 533–621; sequence RQFTTEDFEK…LIAALLFETS (89 aa).

Functionally, plays an important role in meiotic recombination and associated DNA double-strand break repair. The sequence is that of Minichromosome maintenance domain-containing protein 2 (MCMDC2) from Homo sapiens (Human).